The chain runs to 1296 residues: Protein STU1 (1296 aa).

Disordered stretches follow at residues 258 to 287 (ATSAPVLSPPAPTTFAPTTRSQFNSSHGAD), 735 to 793 (LSQT…PPVT), 888 to 946 (ALQQ…HISA), and 953 to 972 (TTSHRVLSSTPSRRAPTNGV). The span at 277-287 (RSQFNSSHGAD) shows a compositional bias: polar residues. 3 stretches are compositionally biased toward low complexity: residues 755-782 (SARSRAISSSSYSSQGSSSSARMQGAAS), 900-919 (TISTSSTSSTNSSTTPASAS), and 933-946 (HSPSPSASASHISA). The segment covering 953-964 (TTSHRVLSSTPS) has biased composition (polar residues).

This sequence belongs to the CLASP family. Interacts with microtubules.

The protein localises to the cytoplasm. It localises to the cytoskeleton. The protein resides in the nucleus. It is found in the spindle. Its function is as follows. Microtubule binding protein that promotes the stabilization of dynamic microtubules. Required for mitotic spindle formation. This is Protein STU1 (STU1) from Mycosarcoma maydis (Corn smut fungus).